Here is a 533-residue protein sequence, read N- to C-terminus: Bifunctional aspartate aminotransferase and L-aspartate beta-decarboxylase (533 aa).

L-aspartate contacts are provided by Gly115 and Asn256. Position 315 is an N6-(pyridoxal phosphate)lysine (Lys315). Arg497 provides a ligand contact to L-aspartate.

This sequence belongs to the class-I pyridoxal-phosphate-dependent aminotransferase family. As to quaternary structure, homododecamer. Pyridoxal 5'-phosphate serves as cofactor.

The catalysed reaction is L-aspartate + H(+) = L-alanine + CO2. The enzyme catalyses L-aspartate + 2-oxoglutarate = oxaloacetate + L-glutamate. Its function is as follows. Bifunctional enzyme that has both L-aspartate decarboxylase and transaminase activity. This Comamonas testosteroni (Pseudomonas testosteroni) protein is Bifunctional aspartate aminotransferase and L-aspartate beta-decarboxylase.